We begin with the raw amino-acid sequence, 100 residues long: Cytochrome b (100 aa).

The next 3 membrane-spanning stretches (helical) occupy residues 1-21, 45-66, and 81-100; these read MGSL…FLAM, WLIR…YLHI, and WNIG…VGYV. Residues His-51 and His-65 each contribute to the heme b site.

It belongs to the cytochrome b family. As to quaternary structure, the cytochrome bc1 complex contains 3 respiratory subunits (MT-CYB, CYC1 and UQCRFS1), 2 core proteins (UQCRC1 and UQCRC2) and probably 6 low-molecular weight proteins. It depends on heme b as a cofactor.

The protein resides in the mitochondrion inner membrane. Functionally, component of the ubiquinol-cytochrome c reductase complex (complex III or cytochrome b-c1 complex) that is part of the mitochondrial respiratory chain. The b-c1 complex mediates electron transfer from ubiquinol to cytochrome c. Contributes to the generation of a proton gradient across the mitochondrial membrane that is then used for ATP synthesis. This Polypterus sp. (Bichir) protein is Cytochrome b (mt-cyb).